The chain runs to 227 residues: Cytochrome c oxidase subunit 2 (227 aa).

Topologically, residues 1–14 (MAHAAQMGLQDATS) are mitochondrial intermembrane. Residues 15 to 45 (PIMEELISFHDHALMIIFLISFLVLYALFLT) traverse the membrane as a helical segment. Over 46-59 (LTTKLTNTNITDAQ) the chain is Mitochondrial matrix. Residues 60-87 (EMETVWTILPAIILVLIALPSLRILYLT) traverse the membrane as a helical segment. Residues 88-227 (DEINDPSFTI…IFEMGPVFTL (140 aa)) are Mitochondrial intermembrane-facing. Residues His-161, Cys-196, Glu-198, Cys-200, His-204, and Met-207 each coordinate Cu cation. Mg(2+) is bound at residue Glu-198.

The protein belongs to the cytochrome c oxidase subunit 2 family. As to quaternary structure, component of the cytochrome c oxidase (complex IV, CIV), a multisubunit enzyme composed of 14 subunits. The complex is composed of a catalytic core of 3 subunits MT-CO1, MT-CO2 and MT-CO3, encoded in the mitochondrial DNA, and 11 supernumerary subunits COX4I, COX5A, COX5B, COX6A, COX6B, COX6C, COX7A, COX7B, COX7C, COX8 and NDUFA4, which are encoded in the nuclear genome. The complex exists as a monomer or a dimer and forms supercomplexes (SCs) in the inner mitochondrial membrane with NADH-ubiquinone oxidoreductase (complex I, CI) and ubiquinol-cytochrome c oxidoreductase (cytochrome b-c1 complex, complex III, CIII), resulting in different assemblies (supercomplex SCI(1)III(2)IV(1) and megacomplex MCI(2)III(2)IV(2)). Found in a complex with TMEM177, COA6, COX18, COX20, SCO1 and SCO2. Interacts with TMEM177 in a COX20-dependent manner. Interacts with COX20. Interacts with COX16. Requires Cu cation as cofactor.

The protein localises to the mitochondrion inner membrane. It carries out the reaction 4 Fe(II)-[cytochrome c] + O2 + 8 H(+)(in) = 4 Fe(III)-[cytochrome c] + 2 H2O + 4 H(+)(out). In terms of biological role, component of the cytochrome c oxidase, the last enzyme in the mitochondrial electron transport chain which drives oxidative phosphorylation. The respiratory chain contains 3 multisubunit complexes succinate dehydrogenase (complex II, CII), ubiquinol-cytochrome c oxidoreductase (cytochrome b-c1 complex, complex III, CIII) and cytochrome c oxidase (complex IV, CIV), that cooperate to transfer electrons derived from NADH and succinate to molecular oxygen, creating an electrochemical gradient over the inner membrane that drives transmembrane transport and the ATP synthase. Cytochrome c oxidase is the component of the respiratory chain that catalyzes the reduction of oxygen to water. Electrons originating from reduced cytochrome c in the intermembrane space (IMS) are transferred via the dinuclear copper A center (CU(A)) of subunit 2 and heme A of subunit 1 to the active site in subunit 1, a binuclear center (BNC) formed by heme A3 and copper B (CU(B)). The BNC reduces molecular oxygen to 2 water molecules using 4 electrons from cytochrome c in the IMS and 4 protons from the mitochondrial matrix. The polypeptide is Cytochrome c oxidase subunit 2 (MT-CO2) (Symphalangus syndactylus (Siamang)).